Consider the following 839-residue polypeptide: MKYNANTSNQFRAMFFKNATFLKRQKCSLGVQIAIPMALVIVLVILKLWIESQIENNSGPVGDSSGDDIMGSYISYKFDYMQGWFYTINPNNITNIGYKDGYGNGTGLLGGINQYEIYWNGSDLWVPYTVAVESGQKMNDMVLAQKQQLGQSSMGPLTFPIAGIQFNEFNPQNNLIDLTITCEQQIRYAYNNFENNLIYVLSQIQTSFINYLLNGNGVVVKTQISTLPYIYKSQQFDIASLLGGSFFPFALSFVLPLFMYSIVYEKQEKLRDLSLMMGLKMRNYWIMTFIFNFLTYVVIVSVISLICSAAKVSLFVKGSPFALFLLLFLWGLSMVSFAFFLSTFFKRTRAASIFGYFFVMVMVNLNSTLSLFNTSVPVFYYWVPILAFSRGISTLCGLCGNGLCPPLSQYTWDFELSRILFWLFIDTIVYLTLAVYLDKVLPREFGVPSHPLFFIKDLKELFSKKGKYRKLRDGDGINEKTKLINEYTIDGINNDDDDDGLMDEDVKKERDMIVKGEYNPEEMTLIVQGLRKQFPGRPKPALSNLYLSVKKGEVLGYLGPNGAGKTTSISILTGLYTPTSGTAHIAGLDIRYDMDKIHQVIGVVMQFDVLWEDLTCEETILYYTRLKGTPKSIEFESTHNILKEVNLLDVKDRFVKELSGGMKRRLSFAIAMTGESSIIFLDEPTTGLSIETRKDLWGTINELKKNRSIILTTHSMQEADILSDRIAIVSQGKLQCIGTQTHLKQKFGDGYSVRIDIQEDYQNTHNPTDLIKSFSPSATLSETFNGSYVYRLPKDSIISDLYEYLVLNKEQYHLQEWSLSQTSLEDVFLKISANDDTVN.

Helical transmembrane passes span 30–50 (GVQI…KLWI), 238–258 (IASL…LPLF), 286–306 (IMTF…ISLI), 321–341 (FALF…AFFL), 352–372 (SIFG…LSLF), 378–398 (VFYY…LCGL), and 419–439 (ILFW…YLDK). One can recognise an ABC transporter domain in the interval 525–756 (LIVQGLRKQF…FGDGYSVRID (232 aa)). Residue 559–566 (GPNGAGKT) coordinates ATP.

This sequence belongs to the ABC transporter superfamily. ABCA family.

The protein resides in the membrane. The protein is ABC transporter A family member 7 (abcA7) of Dictyostelium discoideum (Social amoeba).